We begin with the raw amino-acid sequence, 189 residues long: Potassium-transporting ATPase KdpC subunit (189 aa).

Residues 6-26 (PAILFFIVFTILCGGVYPAVV) traverse the membrane as a helical segment.

Belongs to the KdpC family. As to quaternary structure, the system is composed of three essential subunits: KdpA, KdpB and KdpC.

The protein localises to the cell inner membrane. Its function is as follows. Part of the high-affinity ATP-driven potassium transport (or Kdp) system, which catalyzes the hydrolysis of ATP coupled with the electrogenic transport of potassium into the cytoplasm. This subunit acts as a catalytic chaperone that increases the ATP-binding affinity of the ATP-hydrolyzing subunit KdpB by the formation of a transient KdpB/KdpC/ATP ternary complex. In Geotalea uraniireducens (strain Rf4) (Geobacter uraniireducens), this protein is Potassium-transporting ATPase KdpC subunit.